Consider the following 1366-residue polypeptide: DNA-directed RNA polymerase subunit beta' (1366 aa).

Residues Met1–Lys20 show a composition bias toward basic residues. The segment at Met1–Phe37 is disordered. Zn(2+) is bound by residues Cys248, Cys315, Cys322, and Cys325. The tract at residues Thr1292–Glu1366 is disordered. Residues Leu1354–Glu1366 are compositionally biased toward low complexity.

Belongs to the RNA polymerase beta' chain family. RpoC2 subfamily. In cyanobacteria the RNAP catalytic core is composed of 2 alpha, 1 beta, 1 beta', 1 gamma and 1 omega subunit. When a sigma factor is associated with the core the holoenzyme is formed, which can initiate transcription. Zn(2+) serves as cofactor.

The catalysed reaction is RNA(n) + a ribonucleoside 5'-triphosphate = RNA(n+1) + diphosphate. Functionally, DNA-dependent RNA polymerase catalyzes the transcription of DNA into RNA using the four ribonucleoside triphosphates as substrates. The protein is DNA-directed RNA polymerase subunit beta' of Prochlorococcus marinus (strain MIT 9215).